Consider the following 293-residue polypeptide: Pyridoxal 5'-phosphate synthase subunit PdxS (293 aa).

Asp-23 contributes to the D-ribose 5-phosphate binding site. Catalysis depends on Lys-80, which acts as the Schiff-base intermediate with D-ribose 5-phosphate. Position 152 (Gly-152) interacts with D-ribose 5-phosphate. D-glyceraldehyde 3-phosphate is bound at residue Arg-164. D-ribose 5-phosphate is bound by residues Gly-213 and 234–235 (GS).

This sequence belongs to the PdxS/SNZ family. In terms of assembly, in the presence of PdxT, forms a dodecamer of heterodimers.

It catalyses the reaction aldehydo-D-ribose 5-phosphate + D-glyceraldehyde 3-phosphate + L-glutamine = pyridoxal 5'-phosphate + L-glutamate + phosphate + 3 H2O + H(+). Its pathway is cofactor biosynthesis; pyridoxal 5'-phosphate biosynthesis. In terms of biological role, catalyzes the formation of pyridoxal 5'-phosphate from ribose 5-phosphate (RBP), glyceraldehyde 3-phosphate (G3P) and ammonia. The ammonia is provided by the PdxT subunit. Can also use ribulose 5-phosphate and dihydroxyacetone phosphate as substrates, resulting from enzyme-catalyzed isomerization of RBP and G3P, respectively. This chain is Pyridoxal 5'-phosphate synthase subunit PdxS, found in Dehalococcoides mccartyi (strain ATCC BAA-2100 / JCM 16839 / KCTC 5957 / BAV1).